The primary structure comprises 464 residues: Alpha-1,6-mannosyl-glycoprotein 4-beta-N-acetylglucosaminyltransferase (464 aa).

Topologically, residues 1 to 10 (MRCSPKRSLT) are cytoplasmic. Residues 11-31 (AVIAASFLLLLLLLLLHRGSW) form a helical; Signal-anchor for type II membrane protein membrane-spanning segment. Over 32–464 (QDPQEVQFRD…QSIGIWTAGT (433 aa)) the chain is Lumenal. N-linked (GlcNAc...) asparagine glycans are attached at residues Asn70 and Asn201.

This sequence belongs to the glycosyltransferase 54 family. The cofactor is a divalent metal cation. In terms of tissue distribution, highly expressed in oviduct, spleen, lung and colon.

It is found in the golgi apparatus membrane. It catalyses the reaction N(4)-{beta-D-GlcNAc-(1-&gt;2)-[beta-D-GlcNAc-(1-&gt;4)]-alpha-D-Man-(1-&gt;3)-[beta-D-GlcNAc-(1-&gt;2)-[beta-D-GlcNAc-(1-&gt;6)]-alpha-D-Man-(1-&gt;6)]-beta-D-Man-(1-&gt;4)-beta-D-GlcNAc-(1-&gt;4)-beta-D-GlcNAc}-L-asparaginyl-[protein] + UDP-N-acetyl-alpha-D-glucosamine = N(4)-{beta-D-GlcNAc-(1-&gt;2)-[beta-D-GlcNAc-(1-&gt;4)]-alpha-D-Man-(1-&gt;3)-[beta-D-GlcNAc-(1-&gt;2)-[beta-D-GlcNAc-(1-&gt;4)]-[beta-D-GlcNAc-(1-&gt;6)]-alpha-D-Man-(1-&gt;6)]-beta-D-Man-(1-&gt;4)-beta-D-GlcNAc-(1-&gt;4)-beta-D-GlcNAc}-L-asparaginyl-[protein] + UDP + H(+). It participates in protein modification; protein glycosylation. In terms of biological role, glycosyltransferase that catalyzes the transfer of GlcNAc to the Manalpha1-6 arm to form GlcNAcBeta1-4Manalpha1-6 linkage (also named 'GnT-VI' activity). May also participate in the transfer of N-acetylglucosamine (GlcNAc) to the core mannose residues of N-linked glycans by catalyzing the formation of the GlcNAcbeta1-4 branch on the GlcNAcbeta1-2Manalpha1-3 arm of the core structure of N-linked glycans. In Gallus gallus (Chicken), this protein is Alpha-1,6-mannosyl-glycoprotein 4-beta-N-acetylglucosaminyltransferase (MGAT4C).